Here is a 21-residue protein sequence, read N- to C-terminus: Glucose-1-phosphate adenylyltransferase large subunit (21 aa).

The tract at residues 1 to 21 (SVTADNASETKVREIGQEKSS) is disordered. The segment covering 8–21 (SETKVREIGQEKSS) has biased composition (basic and acidic residues).

It belongs to the bacterial/plant glucose-1-phosphate adenylyltransferase family. In terms of assembly, heterotetramer.

The protein resides in the plastid. It localises to the chloroplast. Its subcellular location is the amyloplast. It carries out the reaction alpha-D-glucose 1-phosphate + ATP + H(+) = ADP-alpha-D-glucose + diphosphate. It functions in the pathway glycan biosynthesis; starch biosynthesis. Activated by 3'phosphoglycerate, inhibited by orthophosphate. Allosteric regulation. Functionally, this protein plays a role in synthesis of starch. It catalyzes the synthesis of the activated glycosyl donor, ADP-glucose from Glc-1-P and ATP. This is Glucose-1-phosphate adenylyltransferase large subunit from Spinacia oleracea (Spinach).